A 151-amino-acid chain; its full sequence is Methylated-DNA--protein-cysteine methyltransferase (151 aa).

The Nucleophile; methyl group acceptor role is filled by Cys119.

Belongs to the MGMT family.

Its subcellular location is the cytoplasm. It catalyses the reaction a 6-O-methyl-2'-deoxyguanosine in DNA + L-cysteinyl-[protein] = S-methyl-L-cysteinyl-[protein] + a 2'-deoxyguanosine in DNA. The catalysed reaction is a 4-O-methyl-thymidine in DNA + L-cysteinyl-[protein] = a thymidine in DNA + S-methyl-L-cysteinyl-[protein]. Functionally, involved in the cellular defense against the biological effects of O6-methylguanine (O6-MeG) and O4-methylthymine (O4-MeT) in DNA. Repairs the methylated nucleobase in DNA by stoichiometrically transferring the methyl group to a cysteine residue in the enzyme. This is a suicide reaction: the enzyme is irreversibly inactivated. The sequence is that of Methylated-DNA--protein-cysteine methyltransferase from Saccharolobus islandicus (strain L.S.2.15 / Lassen #1) (Sulfolobus islandicus).